A 344-amino-acid polypeptide reads, in one-letter code: Serine proteinase inhibitor 2 (344 aa).

Belongs to the serpin family. Poxviruses subfamily.

The protein localises to the host cytoplasm. Functionally, viral serpin that inhibits both cysteine and serine proteinases involved in the regulation of host inflammatory and apoptosis processes. Major anti-apoptotic protein which inhibits both intrinsic and extrinsic pathways and strongly cleaves host CASP1 and CASP8 but is a rather poor inhibitor of host CASP3. Prevents the proteolytic activity of host interleukin-1-beta converting enzyme (ICE) and ICE-like enzymes. Can also block apoptosis through host tumor necrosis factor (TNF) receptor. The inhibition of host ICE is an example of a 'cross-class' interaction, in which a serpin inhibits a non-serine proteinase. Also inhibits granzyme B. In Homo sapiens (Human), this protein is Serine proteinase inhibitor 2 (OPG199).